Reading from the N-terminus, the 261-residue chain is Triosephosphate isomerase (261 aa).

Residue 10–12 (NWK) participates in substrate binding. Residue H100 is the Electrophile of the active site. The active-site Proton acceptor is E172. Residues G178, S218, and 239–240 (GG) contribute to the substrate site.

Belongs to the triosephosphate isomerase family. In terms of assembly, homodimer.

Its subcellular location is the cytoplasm. It carries out the reaction D-glyceraldehyde 3-phosphate = dihydroxyacetone phosphate. The protein operates within carbohydrate biosynthesis; gluconeogenesis. It functions in the pathway carbohydrate degradation; glycolysis; D-glyceraldehyde 3-phosphate from glycerone phosphate: step 1/1. In terms of biological role, involved in the gluconeogenesis. Catalyzes stereospecifically the conversion of dihydroxyacetone phosphate (DHAP) to D-glyceraldehyde-3-phosphate (G3P). In Mycobacterium bovis (strain BCG / Pasteur 1173P2), this protein is Triosephosphate isomerase.